Here is an 860-residue protein sequence, read N- to C-terminus: Leucine--tRNA ligase (860 aa).

Positions 42 to 52 (PYPSGRLHMGH) match the 'HIGH' region motif. A 'KMSKS' region motif is present at residues 619 to 623 (KMSKS). Lys622 serves as a coordination point for ATP.

This sequence belongs to the class-I aminoacyl-tRNA synthetase family.

It is found in the cytoplasm. It catalyses the reaction tRNA(Leu) + L-leucine + ATP = L-leucyl-tRNA(Leu) + AMP + diphosphate. The polypeptide is Leucine--tRNA ligase (Erwinia tasmaniensis (strain DSM 17950 / CFBP 7177 / CIP 109463 / NCPPB 4357 / Et1/99)).